A 947-amino-acid polypeptide reads, in one-letter code: Bifunctional glutamine synthetase adenylyltransferase/adenylyl-removing enzyme (947 aa).

The adenylyl removase stretch occupies residues 1–440; it reads MTPLSSPLSQ…VFNELIGDDE (440 aa). The interval 450-947 is adenylyl transferase; sequence SEPWREVWQD…ASWRKWLVAV (498 aa).

It belongs to the GlnE family. The cofactor is Mg(2+).

It carries out the reaction [glutamine synthetase]-O(4)-(5'-adenylyl)-L-tyrosine + phosphate = [glutamine synthetase]-L-tyrosine + ADP. The enzyme catalyses [glutamine synthetase]-L-tyrosine + ATP = [glutamine synthetase]-O(4)-(5'-adenylyl)-L-tyrosine + diphosphate. Functionally, involved in the regulation of glutamine synthetase GlnA, a key enzyme in the process to assimilate ammonia. When cellular nitrogen levels are high, the C-terminal adenylyl transferase (AT) inactivates GlnA by covalent transfer of an adenylyl group from ATP to specific tyrosine residue of GlnA, thus reducing its activity. Conversely, when nitrogen levels are low, the N-terminal adenylyl removase (AR) activates GlnA by removing the adenylyl group by phosphorolysis, increasing its activity. The regulatory region of GlnE binds the signal transduction protein PII (GlnB) which indicates the nitrogen status of the cell. This Salmonella paratyphi B (strain ATCC BAA-1250 / SPB7) protein is Bifunctional glutamine synthetase adenylyltransferase/adenylyl-removing enzyme.